Here is a 373-residue protein sequence, read N- to C-terminus: Superinfection exclusion protein (373 aa).

The signal sequence occupies residues 1–15 (MIVLLILSLACTAFT).

Belongs to the serpin family. Orthopoxvirus OPG040 subfamily. Interacts with A56 protein.

Its subcellular location is the virion membrane. It is found in the host cell membrane. Prevents cell to cell fusion via its interaction with A56 protein. The A56-K2 complex associates with components of the entry fusion complex (EFC) presumably to avoid superinfection and syncytium formation. The polypeptide is Superinfection exclusion protein (OPG040) (Homo sapiens (Human)).